Reading from the N-terminus, the 102-residue chain is Parathymosin (102 aa).

Residues M1–A102 form a disordered region. N-acetylserine is present on S2. S2 carries the phosphoserine modification. N6-acetyllysine is present on K4. A phosphoserine mark is found at S5 and S13. The segment covering S13–V37 has biased composition (basic and acidic residues). The residue at position 15 (K15) is an N6-acetyllysine. A compositionally biased stretch (acidic residues) spans V38–G76. T52 carries the phosphothreonine modification. K92 is modified (N6-acetyllysine).

The protein belongs to the pro/parathymosin family.

Parathymosin may mediate immune function by blocking the effect of prothymosin alpha which confers resistance to certain opportunistic infections. The protein is Parathymosin (PTMS) of Homo sapiens (Human).